The sequence spans 122 residues: Large ribosomal subunit protein uL14 (122 aa).

This sequence belongs to the universal ribosomal protein uL14 family. In terms of assembly, part of the 50S ribosomal subunit. Forms a cluster with proteins L3 and L19. In the 70S ribosome, L14 and L19 interact and together make contacts with the 16S rRNA in bridges B5 and B8.

In terms of biological role, binds to 23S rRNA. Forms part of two intersubunit bridges in the 70S ribosome. This chain is Large ribosomal subunit protein uL14, found in Chlamydia pneumoniae (Chlamydophila pneumoniae).